A 152-amino-acid chain; its full sequence is Ribosome maturation factor RimP (152 aa).

This sequence belongs to the RimP family.

It is found in the cytoplasm. Its function is as follows. Required for maturation of 30S ribosomal subunits. This is Ribosome maturation factor RimP from Yersinia enterocolitica serotype O:8 / biotype 1B (strain NCTC 13174 / 8081).